Here is a 331-residue protein sequence, read N- to C-terminus: Ketol-acid reductoisomerase (NADP(+)) (331 aa).

The region spanning 2-182 (AKMYYDKDAD…GGTRAGVIET (181 aa)) is the KARI N-terminal Rossmann domain. NADP(+)-binding positions include 25-28 (FGSQ), Ser-51, Ser-53, and 83-86 (DEKQ). His-108 is an active-site residue. An NADP(+)-binding site is contributed by Gly-134. Residues 183 to 328 (TFKEETETDL…KGLREMMAWI (146 aa)) enclose the KARI C-terminal knotted domain. Residues Asp-191, Glu-195, Glu-227, and Glu-231 each contribute to the Mg(2+) site. A substrate-binding site is contributed by Ser-252.

It belongs to the ketol-acid reductoisomerase family. Mg(2+) is required as a cofactor.

The enzyme catalyses (2R)-2,3-dihydroxy-3-methylbutanoate + NADP(+) = (2S)-2-acetolactate + NADPH + H(+). The catalysed reaction is (2R,3R)-2,3-dihydroxy-3-methylpentanoate + NADP(+) = (S)-2-ethyl-2-hydroxy-3-oxobutanoate + NADPH + H(+). The protein operates within amino-acid biosynthesis; L-isoleucine biosynthesis; L-isoleucine from 2-oxobutanoate: step 2/4. Its pathway is amino-acid biosynthesis; L-valine biosynthesis; L-valine from pyruvate: step 2/4. In terms of biological role, involved in the biosynthesis of branched-chain amino acids (BCAA). Catalyzes an alkyl-migration followed by a ketol-acid reduction of (S)-2-acetolactate (S2AL) to yield (R)-2,3-dihydroxy-isovalerate. In the isomerase reaction, S2AL is rearranged via a Mg-dependent methyl migration to produce 3-hydroxy-3-methyl-2-ketobutyrate (HMKB). In the reductase reaction, this 2-ketoacid undergoes a metal-dependent reduction by NADPH to yield (R)-2,3-dihydroxy-isovalerate. The chain is Ketol-acid reductoisomerase (NADP(+)) from Thermoanaerobacter pseudethanolicus (strain ATCC 33223 / 39E) (Clostridium thermohydrosulfuricum).